The chain runs to 691 residues: UvrABC system protein C (691 aa).

In terms of domain architecture, GIY-YIG spans Ser20 to Ile97. The UVR domain maps to Asp204–Ile239. Residues Arg662–Asp691 form a disordered region. Basic and acidic residues predominate over residues Val668–Gln680.

The protein belongs to the UvrC family. As to quaternary structure, interacts with UvrB in an incision complex.

The protein resides in the cytoplasm. In terms of biological role, the UvrABC repair system catalyzes the recognition and processing of DNA lesions. UvrC both incises the 5' and 3' sides of the lesion. The N-terminal half is responsible for the 3' incision and the C-terminal half is responsible for the 5' incision. This chain is UvrABC system protein C, found in Treponema pallidum (strain Nichols).